The following is a 220-amino-acid chain: Deoxyribose-phosphate aldolase (220 aa).

The active-site Proton donor/acceptor is the Asp-89. Residue Lys-151 is the Schiff-base intermediate with acetaldehyde of the active site. Catalysis depends on Lys-180, which acts as the Proton donor/acceptor.

It belongs to the DeoC/FbaB aldolase family. DeoC type 1 subfamily.

It localises to the cytoplasm. The enzyme catalyses 2-deoxy-D-ribose 5-phosphate = D-glyceraldehyde 3-phosphate + acetaldehyde. It functions in the pathway carbohydrate degradation; 2-deoxy-D-ribose 1-phosphate degradation; D-glyceraldehyde 3-phosphate and acetaldehyde from 2-deoxy-alpha-D-ribose 1-phosphate: step 2/2. Functionally, catalyzes a reversible aldol reaction between acetaldehyde and D-glyceraldehyde 3-phosphate to generate 2-deoxy-D-ribose 5-phosphate. This chain is Deoxyribose-phosphate aldolase, found in Streptococcus mutans serotype c (strain ATCC 700610 / UA159).